A 474-amino-acid polypeptide reads, in one-letter code: Hepatocyte nuclear factor 4-alpha (474 aa).

The segment at residues 57-132 (SALCAICGDR…AGMKKEAVQN (76 aa)) is a DNA-binding region (nuclear receptor). 2 consecutive NR C4-type zinc fingers follow at residues 60–80 (CAIC…CDGC) and 96–120 (CRFS…LKKC). Residues serine 142 and serine 143 each carry the phosphoserine modification. Tyrosine 144 is modified (phosphotyrosine). An NR LBD domain is found at 147–377 (SSLPSINALL…NLLQEMLLGG (231 aa)). Threonine 166 is modified (phosphothreonine). Serine 167 bears the Phosphoserine mark. Residues lysine 234 and lysine 307 each participate in a glycyl lysine isopeptide (Lys-Gly) (interchain with G-Cter in ubiquitin) cross-link. Phosphoserine; by AMPK is present on serine 313. The 9aaTAD motif lies at 368-376 (NLLQEMLLG). Residues 413-450 (SNGQMCEWPRPRGQAATPETPQPSPPSGSGSESYKLLP) form a disordered region. Phosphothreonine is present on residues threonine 429 and threonine 432. Serine 436 is subject to Phosphoserine. Lysine 458 is modified (N6-acetyllysine).

The protein belongs to the nuclear hormone receptor family. NR2 subfamily. Homodimerization is required for HNF4-alpha to bind to its recognition site. Interacts with CLOCK, BMAL1 and PER1. Interacts with PER2. Interacts with CRY1 and CRY2. Interacts with NR0B2/SHP; the resulting heterodimer is transcriptionally inactive. Interacts with DDX3X; this interaction disrupts the interaction between HNF4 and NR0B2 that forms inactive heterodimers and enhances the formation of active HNF4 homodimers. Post-translationally, phosphorylated on tyrosine residue(s); phosphorylation is important for its DNA-binding activity. Phosphorylation may directly or indirectly play a regulatory role in the subnuclear distribution. Phosphorylation at Ser-313 by AMPK reduces the ability to form homodimers and bind DNA. Acetylation at Lys-458 lowers transcriptional activation by about two-fold. In terms of tissue distribution, expressed in the liver, pancreas and colon in a circadian manner.

Its subcellular location is the nucleus. In terms of biological role, transcriptional regulator which controls the expression of hepatic genes during the transition of endodermal cells to hepatic progenitor cells, facilitatating the recruitment of RNA pol II to the promoters of target genes. Activates the transcription of CYP2C38. Represses the CLOCK-BMAL1 transcriptional activity and is essential for circadian rhythm maintenance and period regulation in the liver and colon cells. The protein is Hepatocyte nuclear factor 4-alpha (Hnf4a) of Mus musculus (Mouse).